Reading from the N-terminus, the 470-residue chain is Crh-like protein UTR2 (470 aa).

The N-terminal stretch at 1–23 (MRFSTLHFAFLATLSSIFTVVAA) is a signal peptide. Cysteine 58 and cysteine 69 are disulfide-bonded. Residues asparagine 65, asparagine 100, and asparagine 125 are each glycosylated (N-linked (GlcNAc...) asparagine). The 188-residue stretch at 95-282 (SDYLGNSTEA…WAGGLINWDS (188 aa)) folds into the GH16 domain. Glutamate 168 (nucleophile) is an active-site residue. The Proton donor role is filled by glutamate 172. Glutamate 172 serves as a coordination point for chitin. N-linked (GlcNAc...) asparagine glycosylation is found at asparagine 177, asparagine 194, asparagine 198, asparagine 202, asparagine 235, and asparagine 239. Chitin-binding residues include tryptophan 259 and threonine 270. Residues asparagine 314 and asparagine 327 are each glycosylated (N-linked (GlcNAc...) asparagine). The interval 347–446 (SDDATGFDPQ…SSGSSSQGVA (100 aa)) is disordered. Low complexity-rich tracts occupy residues 370–384 (TTIT…ITSV) and 392–408 (TANV…QATA). The segment covering 409–418 (KSSTGTNTYD) has biased composition (polar residues). Residues 433-446 (TDSGSSGSSSQGVA) are compositionally biased toward low complexity. The GPI-anchor amidated serine moiety is linked to residue serine 440. The propeptide at 441–470 (SSQGVANSLNESVISGIFASICLGILSFFM) is removed in mature form. N-linked (GlcNAc...) asparagine glycosylation occurs at asparagine 450.

Belongs to the glycosyl hydrolase 16 family. CRH1 subfamily. In terms of processing, the GPI-anchor is attached to the protein in the endoplasmic reticulum and serves to target the protein to the cell surface. There, the glucosamine-inositol phospholipid moiety is cleaved off and the GPI-modified mannoprotein is covalently attached via its lipidless GPI glycan remnant to the 1,6-beta-glucan of the outer cell wall layer.

Its subcellular location is the secreted. The protein localises to the cell wall. The protein resides in the membrane. The enzyme catalyses Random endo-hydrolysis of N-acetyl-beta-D-glucosaminide (1-&gt;4)-beta-linkages in chitin and chitodextrins.. Dual chitinase/transglycosylase that plays a role in cell wall architecture. Chitinase and transglycosylase activities are coupled. Required for the polysaccharide cross-linking at the septa and the cell wall. More specifically, transfers chitin to 1,6-beta-glucan in the cell wall. Plays an important role in fungal pathogenesis via its functions in cell wall assembly and regeneration, filamentation, and adherence to host cells. Acts as a cell surface antigen in acute candidemia patients. This is Crh-like protein UTR2 from Candida albicans (strain SC5314 / ATCC MYA-2876) (Yeast).